The chain runs to 1410 residues: Endoribonuclease Dicer homolog 2a (1410 aa).

A compositionally biased stretch (gly residues) spans 1-15 (MGGPLTAAGGRGDGG). A disordered region spans residues 1-30 (MGGPLTAAGGRGDGGAKAVEPLRPPPPPDP). Residues 41–222 (ALERAVRGNT…HNYSKQISEI (182 aa)) enclose the Helicase ATP-binding domain. 54–61 (LETGSGKT) serves as a coordination point for ATP. The DECH box signature appears at 163–166 (DECH). The region spanning 388 to 561 (TLLQYRHMQD…DTYYRVESTR (174 aa)) is the Helicase C-terminal domain. The 87-residue stretch at 569-655 (SVPLIHFFCS…LPELDVPCDE (87 aa)) folds into the Dicer dsRNA-binding fold domain. Residues 827–942 (KDIDLLQTKD…LPPELCRIIM (116 aa)) enclose the PAZ domain. 2 RNase III domains span residues 969–1124 (SVKL…STAG) and 1161–1308 (VRSL…LDSK). The Mg(2+) site is built by E1200, D1294, and E1297. The DRBM domain maps to 1334–1400 (DPVKGLQEFC…SKAVLKDLIA (67 aa)).

Belongs to the helicase family. Dicer subfamily. In terms of assembly, may interact with ARGONAUTE1 or PINHEAD through their common PAZ domains. The cofactor is Mg(2+). Mn(2+) is required as a cofactor.

It localises to the nucleus. Probably involved in the RNA silencing pathway. May cleave double-stranded RNA to produce short 21-24 nucleotides (nt) RNAs which target the selective destruction of complementary RNAs. This Oryza sativa subsp. japonica (Rice) protein is Endoribonuclease Dicer homolog 2a (DCL2A).